We begin with the raw amino-acid sequence, 122 residues long: Small ribosomal subunit protein uS13 (122 aa).

Residues 95 to 122 form a disordered region; the sequence is GLPVRGQKTKTNARTRKGPKRTVANKKK.

This sequence belongs to the universal ribosomal protein uS13 family. Part of the 30S ribosomal subunit. Forms a loose heterodimer with protein S19. Forms two bridges to the 50S subunit in the 70S ribosome.

Located at the top of the head of the 30S subunit, it contacts several helices of the 16S rRNA. In the 70S ribosome it contacts the 23S rRNA (bridge B1a) and protein L5 of the 50S subunit (bridge B1b), connecting the 2 subunits; these bridges are implicated in subunit movement. Contacts the tRNAs in the A and P-sites. The polypeptide is Small ribosomal subunit protein uS13 (Lachnoclostridium phytofermentans (strain ATCC 700394 / DSM 18823 / ISDg) (Clostridium phytofermentans)).